We begin with the raw amino-acid sequence, 216 residues long: Octanoyltransferase (216 aa).

Residues 35-213 (NSNPDFIWIG…IIQEEFNFDF (179 aa)) form the BPL/LPL catalytic domain. Substrate contacts are provided by residues 77 to 84 (RGGEVTCH), 144 to 146 (SIG), and 157 to 159 (GFS). Cys175 (acyl-thioester intermediate) is an active-site residue.

This sequence belongs to the LipB family.

Its subcellular location is the cytoplasm. The enzyme catalyses octanoyl-[ACP] + L-lysyl-[protein] = N(6)-octanoyl-L-lysyl-[protein] + holo-[ACP] + H(+). The protein operates within protein modification; protein lipoylation via endogenous pathway; protein N(6)-(lipoyl)lysine from octanoyl-[acyl-carrier-protein]: step 1/2. Its function is as follows. Catalyzes the transfer of endogenously produced octanoic acid from octanoyl-acyl-carrier-protein onto the lipoyl domains of lipoate-dependent enzymes. Lipoyl-ACP can also act as a substrate although octanoyl-ACP is likely to be the physiological substrate. The sequence is that of Octanoyltransferase from Prochlorococcus marinus (strain MIT 9215).